The chain runs to 528 residues: Na(+)/H(+) antiporter NhaB (528 aa).

11 helical membrane passes run 23–43, 45–65, 90–110, 136–156, 204–224, 237–257, 305–325, 350–370, 392–412, 450–470, and 479–499; these read VAII…NPFV, GWLL…CYPL, LVAN…IYFM, CFAA…AVVI, LLMH…VGEP, FGEF…CGLI, GIIA…VGLI, EEAL…AVII, LALF…VFVG, ATPN…APLI, and VMAL…IMFF.

It belongs to the NhaB Na(+)/H(+) (TC 2.A.34) antiporter family.

The protein resides in the cell inner membrane. The enzyme catalyses 2 Na(+)(in) + 3 H(+)(out) = 2 Na(+)(out) + 3 H(+)(in). Na(+)/H(+) antiporter that extrudes sodium in exchange for external protons. Can also transport lithium and potassium. The sequence is that of Na(+)/H(+) antiporter NhaB from Vibrio parahaemolyticus serotype O3:K6 (strain RIMD 2210633).